Reading from the N-terminus, the 340-residue chain is Fructoselysine 6-phosphate deglycase (340 aa).

SIS domains lie at 35 to 169 (IVEE…RLAP) and 201 to 331 (LGEL…PDER).

As to quaternary structure, homododecamer.

It carries out the reaction N(6)-(6-phospho-D-fructosyl)-L-lysine + H2O = D-glucose 6-phosphate + L-lysine. Its pathway is carbohydrate metabolism; fructoselysine degradation; D-glucose 6-phosphate and lysine from fructoselysine: step 2/2. In terms of biological role, catalyzes the reversible conversion of fructoselysine 6-phosphate to glucose 6-phosphate and lysine. Functions in a fructoselysine degradation pathway that allows E.coli to grow on fructoselysine or psicoselysine. The protein is Fructoselysine 6-phosphate deglycase (frlB) of Escherichia coli O157:H7.